Here is a 265-residue protein sequence, read N- to C-terminus: MMQELKQSYIKTFDKDDVALSTNDLSVLYGGKVQKLFDASLQFKKNTITALIGASGSGKSTFLRSLNRMNDKVATVNGEIWFHGLDVNKPNINVYELRKSIGMVFQRPNPFPKSIRENIVYALKANGKTDKQELDKIVEESLRAAALWDEVKDKLDKSALALSGGQQQRLCIARALAVQPQILLLDEPASALDPVSTSKLEDTLKQLRSKYTMVMVTHNMQQASRISDYTAFFHLGHVIEYNSTAEIFTNPKGKITEDYIQGSFG.

Residues 20 to 260 (LSTNDLSVLY…PKGKITEDYI (241 aa)) form the ABC transporter domain. 53-60 (GASGSGKS) contributes to the ATP binding site.

Belongs to the ABC transporter superfamily. Phosphate importer (TC 3.A.1.7) family. As to quaternary structure, the complex is composed of two ATP-binding proteins (PstB), two transmembrane proteins (PstC and PstA) and a solute-binding protein (PstS).

The protein localises to the cell membrane. The enzyme catalyses phosphate(out) + ATP + H2O = ADP + 2 phosphate(in) + H(+). In terms of biological role, part of the ABC transporter complex PstSACB involved in phosphate import. Responsible for energy coupling to the transport system. The protein is Phosphate import ATP-binding protein PstB 1 of Lactobacillus acidophilus (strain ATCC 700396 / NCK56 / N2 / NCFM).